The primary structure comprises 845 residues: Protein translocase subunit SecA 1 (845 aa).

Residues glutamine 85, 103–107, and aspartate 492 contribute to the ATP site; that span reads GEGKT.

The protein belongs to the SecA family. As to quaternary structure, monomer and homodimer. Part of the essential Sec protein translocation apparatus which comprises SecA, SecYEG and auxiliary proteins SecDF. Other proteins may also be involved.

The protein resides in the cell membrane. The protein localises to the cytoplasm. The enzyme catalyses ATP + H2O + cellular proteinSide 1 = ADP + phosphate + cellular proteinSide 2.. Part of the Sec protein translocase complex. Interacts with the SecYEG preprotein conducting channel. Has a central role in coupling the hydrolysis of ATP to the transfer of proteins into and across the cell membrane, serving as an ATP-driven molecular motor driving the stepwise translocation of polypeptide chains across the membrane. This chain is Protein translocase subunit SecA 1, found in Corynebacterium glutamicum (strain ATCC 13032 / DSM 20300 / JCM 1318 / BCRC 11384 / CCUG 27702 / LMG 3730 / NBRC 12168 / NCIMB 10025 / NRRL B-2784 / 534).